Consider the following 390-residue polypeptide: Levoglucosan dehydrogenase (390 aa).

10 residues coordinate NADH: Phe13, Met14, Glu43, Thr81, Asn83, His86, Glu103, Lys104, Ala130, and Asn132. Lys104 provides a ligand contact to levoglucosan. Levoglucosan-binding residues include Tyr133 and Gln163. NADH is bound by residues Trp175 and Arg176. Levoglucosan-binding residues include Arg176, Asp189, and His193. Residue Tyr335 coordinates NADH.

Belongs to the Gfo/Idh/MocA family. As to quaternary structure, homotetramer.

The enzyme catalyses levoglucosan + NAD(+) = 3-dehydrolevoglucosan + NADH + H(+). Functionally, catalyzes the oxidation of levoglucosan (1,6-anhydro-beta-D-glucose, LG) to 3-dehydrolevoglucosan (3-keto-LG). Exhibits high substrate specificity toward levoglucosan and NAD(+) for the oxidative reaction. Exhibits weak activities (about 4% compared with that of LG) toward L-sorbose and 1,5-anhydro-D-glucitol, and activity toward D-xylose is also detectable (1.7%). Can also efficiently catalyzes the NADH-dependent reduction (reverse reaction) of 3-keto-LG. The chain is Levoglucosan dehydrogenase from Pseudarthrobacter phenanthrenivorans (strain DSM 18606 / JCM 16027 / LMG 23796 / Sphe3) (Arthrobacter phenanthrenivorans).